The chain runs to 2312 residues: Protein Ycf2 (2312 aa).

Disordered regions lie at residues serine 170–aspartate 191, threonine 223–asparagine 253, and lysine 942–glutamate 1009. The span at lysine 232 to arginine 242 shows a compositional bias: low complexity. Composition is skewed to basic and acidic residues over residues leucine 243–asparagine 252 and lysine 950–arginine 1007. Residue glycine 1439–serine 1446 coordinates ATP. 3 disordered regions span residues tyrosine 1513–glycine 1532, leucine 1857–proline 1983, and proline 2050–serine 2166. The span at threonine 1863–glutamate 1963 shows a compositional bias: acidic residues. The span at glycine 1964–arginine 1976 shows a compositional bias: basic and acidic residues. Composition is skewed to acidic residues over residues proline 2050–glutamate 2067 and glycine 2074–serine 2149.

It belongs to the Ycf2 family.

Its subcellular location is the plastid. It localises to the chloroplast stroma. In terms of biological role, probable ATPase of unknown function. Its presence in a non-photosynthetic plant (Epifagus virginiana) and experiments in tobacco indicate that it has an essential function which is probably not related to photosynthesis. The sequence is that of Protein Ycf2 from Oenothera parviflora (Small-flowered evening primrose).